The primary structure comprises 344 residues: Heat-inducible transcription repressor HrcA (344 aa).

The protein belongs to the HrcA family.

Negative regulator of class I heat shock genes (grpE-dnaK-dnaJ and groELS operons). Prevents heat-shock induction of these operons. The chain is Heat-inducible transcription repressor HrcA from Streptococcus pneumoniae (strain ATCC 700669 / Spain 23F-1).